Consider the following 94-residue polypeptide: Large ribosomal subunit protein bL27 (94 aa).

The propeptide occupies 1–9 (MLKMNLQFF).

Belongs to the bacterial ribosomal protein bL27 family. Post-translationally, the N-terminus is cleaved by ribosomal processing cysteine protease Prp.

The protein is Large ribosomal subunit protein bL27 of Halalkalibacterium halodurans (strain ATCC BAA-125 / DSM 18197 / FERM 7344 / JCM 9153 / C-125) (Bacillus halodurans).